Here is a 75-residue protein sequence, read N- to C-terminus: Cytochrome c oxidase assembly factor 5 (75 aa).

Residues 28-66 form the CHCH domain; sequence QSDCVLQEGKSPKECLKEGYCKALQVTFFECKRSILDNR. A Cx10C motif motif is present at residues 31-42; the sequence is CVLQEGKSPKEC. 2 disulfides stabilise this stretch: cysteine 31/cysteine 58 and cysteine 42/cysteine 48. The Cx9C motif signature appears at 48–58; it reads CKALQVTFFEC.

This sequence belongs to the PET191 family.

Functionally, involved in an early step of the mitochondrial complex IV assembly process. The chain is Cytochrome c oxidase assembly factor 5 (coa5) from Xenopus laevis (African clawed frog).